A 288-amino-acid polypeptide reads, in one-letter code: Oxaloacetate decarboxylase (288 aa).

Residue Ser47 coordinates substrate. Residue Asp85 participates in Mg(2+) binding. Substrate is bound by residues Arg156 and His232.

It belongs to the isocitrate lyase/PEP mutase superfamily. Oxaloacetate decarboxylase family. In terms of assembly, homotetramer; dimer of dimers. The cofactor is Mg(2+).

The catalysed reaction is oxaloacetate + H(+) = pyruvate + CO2. Its function is as follows. Catalyzes the decarboxylation of oxaloacetate into pyruvate. Seems to play a role in maintaining cellular concentrations of bicarbonate and pyruvate. The chain is Oxaloacetate decarboxylase from Rhodopseudomonas palustris (strain BisB18).